Here is a 384-residue protein sequence, read N- to C-terminus: Tryptophan--tRNA ligase (384 aa).

Positions 81–89 match the 'HIGH' region motif; it reads PSGPMHIGH. Positions 252-256 match the 'KMSKS' region motif; the sequence is KMSAS.

The protein belongs to the class-I aminoacyl-tRNA synthetase family.

The protein resides in the cytoplasm. It carries out the reaction tRNA(Trp) + L-tryptophan + ATP = L-tryptophyl-tRNA(Trp) + AMP + diphosphate + H(+). The polypeptide is Tryptophan--tRNA ligase (Thermococcus onnurineus (strain NA1)).